A 252-amino-acid chain; its full sequence is Trans-aconitate 2-methyltransferase (252 aa).

This sequence belongs to the methyltransferase superfamily. Tam family.

It localises to the cytoplasm. It catalyses the reaction trans-aconitate + S-adenosyl-L-methionine = (E)-3-(methoxycarbonyl)pent-2-enedioate + S-adenosyl-L-homocysteine. In terms of biological role, catalyzes the S-adenosylmethionine monomethyl esterification of trans-aconitate. The polypeptide is Trans-aconitate 2-methyltransferase (Shigella dysenteriae serotype 1 (strain Sd197)).